Consider the following 141-residue polypeptide: MAKRFFEAYNETPDGTQCHRKAYITTALGGLCGLISSAYSITHNPADSPLEAVARVGRFTFTAAAIGAMFGLTTCVSAQVREKPDDPLNYFIGGCAGGLTLGARTHSYGTAAIGCVYMGTAAALFKMGKLEGWELFATPKV.

Ala-2 is subject to N-acetylalanine. A run of 2 helical transmembrane segments spans residues 21-43 and 58-80; these read KAYI…SITH and RFTF…SAQV.

This sequence belongs to the complex I NDUFA11 subunit family. In terms of assembly, complex I is composed of 45 different subunits.

Its subcellular location is the mitochondrion inner membrane. Accessory subunit of the mitochondrial membrane respiratory chain NADH dehydrogenase (Complex I), that is believed not to be involved in catalysis. Complex I functions in the transfer of electrons from NADH to the respiratory chain. The immediate electron acceptor for the enzyme is believed to be ubiquinone. The polypeptide is NADH dehydrogenase [ubiquinone] 1 alpha subcomplex subunit 11 (Ndufa11) (Rattus norvegicus (Rat)).